The chain runs to 394 residues: Ornithine aminotransferase 1 (394 aa).

An N6-(pyridoxal phosphate)lysine modification is found at lysine 252.

This sequence belongs to the class-III pyridoxal-phosphate-dependent aminotransferase family. OAT subfamily. Requires pyridoxal 5'-phosphate as cofactor.

It localises to the cytoplasm. It carries out the reaction a 2-oxocarboxylate + L-ornithine = L-glutamate 5-semialdehyde + an L-alpha-amino acid. Its pathway is amino-acid biosynthesis; L-proline biosynthesis; L-glutamate 5-semialdehyde from L-ornithine: step 1/1. Functionally, catalyzes the interconversion of ornithine to glutamate semialdehyde. The sequence is that of Ornithine aminotransferase 1 from Staphylococcus aureus (strain Mu50 / ATCC 700699).